The following is a 97-amino-acid chain: Acylphosphatase (97 aa).

The 89-residue stretch at 9–97 (RKHIVVTGLV…ETARAFGVRQ (89 aa)) folds into the Acylphosphatase-like domain. Residues Arg-24 and Asn-42 contribute to the active site.

This sequence belongs to the acylphosphatase family.

The enzyme catalyses an acyl phosphate + H2O = a carboxylate + phosphate + H(+). In Bifidobacterium longum (strain NCC 2705), this protein is Acylphosphatase (acyP).